We begin with the raw amino-acid sequence, 665 residues long: Ribonuclease R 2 (665 aa).

One can recognise an RNB domain in the interval 202–528 (REDYRNEITY…LIIHRLLHLY (327 aa)). Residues 579-662 (GEVYTGTITG…RKGTVDFEQI (84 aa)) enclose the S1 motif domain.

The protein belongs to the RNR ribonuclease family. RNase R subfamily.

The protein localises to the cytoplasm. It catalyses the reaction Exonucleolytic cleavage in the 3'- to 5'-direction to yield nucleoside 5'-phosphates.. Functionally, 3'-5' exoribonuclease that releases 5'-nucleoside monophosphates and is involved in maturation of structured RNAs. The chain is Ribonuclease R 2 from Lactococcus lactis subsp. lactis (strain IL1403) (Streptococcus lactis).